A 117-amino-acid polypeptide reads, in one-letter code: Immunoglobulin kappa variable 1-12 (117 aa).

A signal peptide spans 1-22 (MDMRVPAQLLGLLLLWFPGSRC). Positions 23–45 (DIQMTQSPSSVSASVGDRVTITC) are framework-1. Residues 24 to 117 (IQMTQSPSSV…YYCQQANSFP (94 aa)) form the Ig-like domain. Cysteines 45 and 110 form a disulfide. Positions 46–56 (RASQGISSWLA) are complementarity-determining-1. Positions 57–71 (WYQQKPGKAPKLLIY) are framework-2. The interval 72 to 78 (AASSLQS) is complementarity-determining-2. Residues 79–110 (GVPSRFSGSGSGTDFTLTISSLQPEDFATYYC) are framework-3. The interval 111–117 (QQANSFP) is complementarity-determining-3.

In terms of assembly, immunoglobulins are composed of two identical heavy chains and two identical light chains; disulfide-linked.

It is found in the secreted. Its subcellular location is the cell membrane. In terms of biological role, v region of the variable domain of immunoglobulin light chains that participates in the antigen recognition. Immunoglobulins, also known as antibodies, are membrane-bound or secreted glycoproteins produced by B lymphocytes. In the recognition phase of humoral immunity, the membrane-bound immunoglobulins serve as receptors which, upon binding of a specific antigen, trigger the clonal expansion and differentiation of B lymphocytes into immunoglobulins-secreting plasma cells. Secreted immunoglobulins mediate the effector phase of humoral immunity, which results in the elimination of bound antigens. The antigen binding site is formed by the variable domain of one heavy chain, together with that of its associated light chain. Thus, each immunoglobulin has two antigen binding sites with remarkable affinity for a particular antigen. The variable domains are assembled by a process called V-(D)-J rearrangement and can then be subjected to somatic hypermutations which, after exposure to antigen and selection, allow affinity maturation for a particular antigen. This Homo sapiens (Human) protein is Immunoglobulin kappa variable 1-12.